Consider the following 590-residue polypeptide: Aspartate--tRNA(Asp/Asn) ligase (590 aa).

Position 175 (Glu175) interacts with L-aspartate. The tract at residues 199 to 202 (QQYK) is aspartate. L-aspartate is bound by residues Arg221 and His450. 221-223 (RDE) lines the ATP pocket. Glu484 is a binding site for ATP. Arg491 is an L-aspartate binding site. Residue 536-539 (GVDR) participates in ATP binding.

The protein belongs to the class-II aminoacyl-tRNA synthetase family. Type 1 subfamily. As to quaternary structure, homodimer.

It localises to the cytoplasm. It carries out the reaction tRNA(Asx) + L-aspartate + ATP = L-aspartyl-tRNA(Asx) + AMP + diphosphate. In terms of biological role, aspartyl-tRNA synthetase with relaxed tRNA specificity since it is able to aspartylate not only its cognate tRNA(Asp) but also tRNA(Asn). Reaction proceeds in two steps: L-aspartate is first activated by ATP to form Asp-AMP and then transferred to the acceptor end of tRNA(Asp/Asn). The protein is Aspartate--tRNA(Asp/Asn) ligase of Rhodopseudomonas palustris (strain BisA53).